A 429-amino-acid chain; its full sequence is Histidinol dehydrogenase (429 aa).

The NAD(+) site is built by Tyr130, Gln191, and Asn214. Ser237, Gln259, and His262 together coordinate substrate. Residues Gln259 and His262 each contribute to the Zn(2+) site. Catalysis depends on proton acceptor residues Glu327 and His328. The substrate site is built by His328, Asp361, Glu415, and His420. Asp361 contributes to the Zn(2+) binding site. A Zn(2+)-binding site is contributed by His420.

The protein belongs to the histidinol dehydrogenase family. It depends on Zn(2+) as a cofactor.

The catalysed reaction is L-histidinol + 2 NAD(+) + H2O = L-histidine + 2 NADH + 3 H(+). It participates in amino-acid biosynthesis; L-histidine biosynthesis; L-histidine from 5-phospho-alpha-D-ribose 1-diphosphate: step 9/9. Functionally, catalyzes the sequential NAD-dependent oxidations of L-histidinol to L-histidinaldehyde and then to L-histidine. In Neisseria meningitidis serogroup A / serotype 4A (strain DSM 15465 / Z2491), this protein is Histidinol dehydrogenase.